The chain runs to 433 residues: uncharacterized protein (433 aa).

Belongs to the arrestin family.

This is an uncharacterized protein from Schizosaccharomyces pombe (strain 972 / ATCC 24843) (Fission yeast).